The chain runs to 136 residues: Large ribosomal subunit protein bL17 (136 aa).

This sequence belongs to the bacterial ribosomal protein bL17 family. Part of the 50S ribosomal subunit. Contacts protein L32.

This Rickettsia peacockii (strain Rustic) protein is Large ribosomal subunit protein bL17.